Here is a 180-residue protein sequence, read N- to C-terminus: Large ribosomal subunit protein uL6c (180 aa).

It belongs to the universal ribosomal protein uL6 family. As to quaternary structure, part of the 50S ribosomal subunit.

It is found in the plastid. The protein localises to the chloroplast. Functionally, binds 23S rRNA. This is Large ribosomal subunit protein uL6c (rpl6) from Pyropia yezoensis (Susabi-nori).